Consider the following 149-residue polypeptide: Nucleoside diphosphate kinase (149 aa).

The ATP site is built by lysine 9, phenylalanine 57, arginine 85, threonine 91, arginine 102, and asparagine 112. Histidine 115 serves as the catalytic Pros-phosphohistidine intermediate.

Belongs to the NDK family. Mg(2+) serves as cofactor.

The protein localises to the cytoplasm. The catalysed reaction is a 2'-deoxyribonucleoside 5'-diphosphate + ATP = a 2'-deoxyribonucleoside 5'-triphosphate + ADP. It carries out the reaction a ribonucleoside 5'-diphosphate + ATP = a ribonucleoside 5'-triphosphate + ADP. In terms of biological role, major role in the synthesis of nucleoside triphosphates other than ATP. The ATP gamma phosphate is transferred to the NDP beta phosphate via a ping-pong mechanism, using a phosphorylated active-site intermediate. This is Nucleoside diphosphate kinase from Methanocorpusculum labreanum (strain ATCC 43576 / DSM 4855 / Z).